The following is a 334-amino-acid chain: Ketol-acid reductoisomerase (NADP(+)) (334 aa).

Positions 1–181 (MTTVYYDQSV…GATRAGVLET (181 aa)) constitute a KARI N-terminal Rossmann domain. NADP(+)-binding positions include 25 to 28 (YGSQ), Arg48, Ser52, and 82 to 85 (DEIQ). His107 is an active-site residue. Gly133 provides a ligand contact to NADP(+). Positions 182 to 327 (SFKEETETDL…RELRDMMPFI (146 aa)) constitute a KARI C-terminal knotted domain. The Mg(2+) site is built by Asp190, Glu194, Glu226, and Glu230. Ser251 provides a ligand contact to substrate.

It belongs to the ketol-acid reductoisomerase family. Mg(2+) serves as cofactor.

The enzyme catalyses (2R)-2,3-dihydroxy-3-methylbutanoate + NADP(+) = (2S)-2-acetolactate + NADPH + H(+). The catalysed reaction is (2R,3R)-2,3-dihydroxy-3-methylpentanoate + NADP(+) = (S)-2-ethyl-2-hydroxy-3-oxobutanoate + NADPH + H(+). It participates in amino-acid biosynthesis; L-isoleucine biosynthesis; L-isoleucine from 2-oxobutanoate: step 2/4. The protein operates within amino-acid biosynthesis; L-valine biosynthesis; L-valine from pyruvate: step 2/4. Functionally, involved in the biosynthesis of branched-chain amino acids (BCAA). Catalyzes an alkyl-migration followed by a ketol-acid reduction of (S)-2-acetolactate (S2AL) to yield (R)-2,3-dihydroxy-isovalerate. In the isomerase reaction, S2AL is rearranged via a Mg-dependent methyl migration to produce 3-hydroxy-3-methyl-2-ketobutyrate (HMKB). In the reductase reaction, this 2-ketoacid undergoes a metal-dependent reduction by NADPH to yield (R)-2,3-dihydroxy-isovalerate. The chain is Ketol-acid reductoisomerase (NADP(+)) from Staphylococcus saprophyticus subsp. saprophyticus (strain ATCC 15305 / DSM 20229 / NCIMB 8711 / NCTC 7292 / S-41).